Consider the following 335-residue polypeptide: GTPase Obg (335 aa).

Residues 1–158 (MFVDQITLEL…RLVELELKLI (158 aa)) enclose the Obg domain. Residues 159 to 334 (ADIGLVGFPN…LYDLFKSKLS (176 aa)) form the OBG-type G domain. Residues 165-172 (GFPNAGKS), 190-194 (FTTLH), 215-218 (DIPG), 285-288 (NKID), and 315-317 (SGL) each bind GTP. The Mg(2+) site is built by S172 and T192.

It belongs to the TRAFAC class OBG-HflX-like GTPase superfamily. OBG GTPase family. In terms of assembly, monomer. Requires Mg(2+) as cofactor.

The protein localises to the cytoplasm. Its function is as follows. An essential GTPase which binds GTP, GDP and possibly (p)ppGpp with moderate affinity, with high nucleotide exchange rates and a fairly low GTP hydrolysis rate. Plays a role in control of the cell cycle, stress response, ribosome biogenesis and in those bacteria that undergo differentiation, in morphogenesis control. In Chlamydia trachomatis serovar L2 (strain ATCC VR-902B / DSM 19102 / 434/Bu), this protein is GTPase Obg.